The sequence spans 202 residues: Small ribosomal subunit protein uS4 (202 aa).

The interval 22 to 48 is disordered; it reads TGKELARRPYAPGDHGQGRRGKLSEYG. Positions 93–154 constitute an S4 RNA-binding domain; the sequence is RRLDNMVYRL…KSKKLAVITG (62 aa).

The protein belongs to the universal ribosomal protein uS4 family. Part of the 30S ribosomal subunit. Contacts protein S5. The interaction surface between S4 and S5 is involved in control of translational fidelity.

One of the primary rRNA binding proteins, it binds directly to 16S rRNA where it nucleates assembly of the body of the 30S subunit. In terms of biological role, with S5 and S12 plays an important role in translational accuracy. In Lactiplantibacillus plantarum (strain ATCC BAA-793 / NCIMB 8826 / WCFS1) (Lactobacillus plantarum), this protein is Small ribosomal subunit protein uS4.